The primary structure comprises 156 residues: Interleukin-36 receptor antagonist protein (156 aa).

The cysteines at positions 9 and 155 are disulfide-linked.

It belongs to the IL-1 family. In terms of assembly, interacts with cargo receptor TMED10; the interaction mediates the translocation from the cytoplasm into the ERGIC (endoplasmic reticulum-Golgi intermediate compartment) and thereby secretion. Post-translationally, removal of N-terminal methionine is necessary for full antagonistic activity. Highly abundant in embryonic tissue and tissues containing epithelial cells.

The protein resides in the cytoplasm. It localises to the secreted. Its function is as follows. Inhibits the activity of interleukin-36 (IL36A,IL36B and IL36G) by binding to receptor IL1RL2/IL-36R and preventing its association with the coreceptor IL1RAP for signaling. Part of the IL-36 signaling system that is thought to be present in epithelial barriers and to take part in local inflammatory response; similar to the IL-1 system with which it shares the coreceptor. Proposed to play a role in skin inflammation. May be involved in the innate immune response to fungal pathogens. May activate an anti-inflammatory signaling pathway by recruiting SIGIRR. This Mus musculus (Mouse) protein is Interleukin-36 receptor antagonist protein.